The chain runs to 66 residues: Putative antitoxin APE_0279a.1 (66 aa).

The protein belongs to the UPF0165 family.

Its function is as follows. Possibly the antitoxin component of a type II toxin-antitoxin (TA) system. This chain is Putative antitoxin APE_0279a.1, found in Aeropyrum pernix (strain ATCC 700893 / DSM 11879 / JCM 9820 / NBRC 100138 / K1).